A 472-amino-acid chain; its full sequence is Estrogen receptor beta (472 aa).

The segment at 1 to 104 (MAFCSPAMMN…NPGSKRDAHF (104 aa)) is modulating. NR C4-type zinc fingers lie at residues 105–125 (CAVCSDYASGYHYGVWSCEGC) and 141–165 (CPATNQCTIDKNRRKSCQACRLRKC). The segment at residues 105-170 (CAVCSDYASG…RLRKCYEVGM (66 aa)) is a DNA-binding region (nuclear receptor). Residues 217–449 (SPEQFVLTLL…DLLLEMLNAH (233 aa)) form the NR LBD domain.

The protein belongs to the nuclear hormone receptor family. NR3 subfamily. As to quaternary structure, binds DNA as a homodimer. Can form a heterodimer with ER-alpha. As to expression, a high expression is seen in the telencephalon, diencephalon, pituitary, testis and kidneys but little or no expression is seen in the cerebellum, pectoral muscle and adrenal gland.

It localises to the nucleus. Binds estrogens with an affinity similar to that of ER-alpha, and activates expression of reporter genes containing estrogen response elements (ERE) in an estrogen-dependent manner. The polypeptide is Estrogen receptor beta (ESR2) (Coturnix japonica (Japanese quail)).